Consider the following 240-residue polypeptide: Probable transcriptional regulatory protein HPG27_148 (240 aa).

It belongs to the TACO1 family.

It is found in the cytoplasm. The sequence is that of Probable transcriptional regulatory protein HPG27_148 from Helicobacter pylori (strain G27).